Consider the following 248-residue polypeptide: Adenosylcobinamide-GDP ribazoletransferase (248 aa).

6 helical membrane-spanning segments follow: residues Phe36 to Leu56, Phe59 to Gly79, Gly114 to Leu134, Tyr137 to Leu157, Ile170 to Leu190, and Ala199 to Leu219.

It belongs to the CobS family. It depends on Mg(2+) as a cofactor.

The protein resides in the cell membrane. The enzyme catalyses alpha-ribazole + adenosylcob(III)inamide-GDP = adenosylcob(III)alamin + GMP + H(+). It catalyses the reaction alpha-ribazole 5'-phosphate + adenosylcob(III)inamide-GDP = adenosylcob(III)alamin 5'-phosphate + GMP + H(+). Its pathway is cofactor biosynthesis; adenosylcobalamin biosynthesis; adenosylcobalamin from cob(II)yrinate a,c-diamide: step 7/7. Functionally, joins adenosylcobinamide-GDP and alpha-ribazole to generate adenosylcobalamin (Ado-cobalamin). Also synthesizes adenosylcobalamin 5'-phosphate from adenosylcobinamide-GDP and alpha-ribazole 5'-phosphate. The polypeptide is Adenosylcobinamide-GDP ribazoletransferase (Clostridium botulinum (strain Loch Maree / Type A3)).